The chain runs to 610 residues: UvrABC system protein C (610 aa).

The region spanning 16-94 (HQPGVYRMYN…IKQYLPKYNV (79 aa)) is the GIY-YIG domain. The 36-residue stretch at 204–239 (QQVLKQLIEKMEVASQQLRFEDAAKFRDQIQAIRRV) folds into the UVR domain.

This sequence belongs to the UvrC family. As to quaternary structure, interacts with UvrB in an incision complex.

The protein resides in the cytoplasm. In terms of biological role, the UvrABC repair system catalyzes the recognition and processing of DNA lesions. UvrC both incises the 5' and 3' sides of the lesion. The N-terminal half is responsible for the 3' incision and the C-terminal half is responsible for the 5' incision. This Vibrio parahaemolyticus serotype O3:K6 (strain RIMD 2210633) protein is UvrABC system protein C.